Here is a 767-residue protein sequence, read N- to C-terminus: Integrin beta-8 (767 aa).

Positions 1–21 (MCGSALAFLTAALLSLHNCQR) are cleaved as a signal peptide. The Extracellular portion of the chain corresponds to 22 to 681 (GPALVLGAAW…SECLSGPSYL (660 aa)). The 50-residue stretch at 46–95 (RCGSANVVSCARCLQLGPECGWCVQEDFVSGGSGSERCDTVSSLISKGCP) folds into the PSI domain. Intrachain disulfides connect Cys-47–Cys-65, Cys-55–Cys-469, Cys-58–Cys-83, Cys-68–Cys-94, Cys-211–Cys-218, Cys-266–Cys-307, Cys-407–Cys-419, Cys-439–Cys-467, Cys-471–Cys-490, Cys-471–Cys-493, Cys-481–Cys-493, Cys-498–Cys-527, Cys-510–Cys-525, Cys-519–Cys-530, Cys-532–Cys-545, Cys-552–Cys-566, Cys-560–Cys-571, Cys-573–Cys-582, Cys-584–Cys-608, Cys-592–Cys-606, Cys-600–Cys-611, Cys-613–Cys-623, Cys-626–Cys-629, Cys-633–Cys-660, and Cys-639–Cys-656. Residues 146–384 (PVDLYYLVDV…NLVVEAYKKI (239 aa)) enclose the VWFA domain. The Mg(2+) site is built by Asp-154 and Ser-156. Asp-193 serves as a coordination point for Ca(2+). The N-linked (GlcNAc...) asparagine glycan is linked to Asn-233. Ca(2+) contacts are provided by Asn-249, Asp-251, Pro-253, and Glu-254. Glu-254 provides a ligand contact to Mg(2+). The N-linked (GlcNAc...) asparagine glycan is linked to Asn-402. 3 N-linked (GlcNAc...) asparagine glycosylation sites follow: Asn-421, Asn-431, and Asn-456. 4 I-EGF domains span residues 471 to 494 (CENH…PQCD), 498 to 546 (CHFD…QYCE), 547 to 583 (KDDF…DRCQ), and 584 to 624 (CPSA…RLCE). Residue Asn-647 is glycosylated (N-linked (GlcNAc...) asparagine). A helical membrane pass occupies residues 682 to 702 (RIFFIIFIVTFLIGLLKVLII). Residues 703–767 (RQVILQWNNN…NAQEAFRCNF (65 aa)) lie on the Cytoplasmic side of the membrane.

It belongs to the integrin beta chain family. In terms of assembly, heterodimer of an alpha and a beta subunit. Beta-8 (ITGB8) associates with alpha-V (ITGAV) to form ITGAV:ITGB8. ITGAV:ITGB8 interacts with TGFB1.

The protein resides in the cell membrane. Functionally, integrin alpha-V:beta-8 (ITGAV:ITGB8) is a receptor for fibronectin. It recognizes the sequence R-G-D in its ligands. Integrin alpha-V:beta-6 (ITGAV:ITGB6) mediates R-G-D-dependent release of transforming growth factor beta-1 (TGF-beta-1) from regulatory Latency-associated peptide (LAP), thereby playing a key role in TGF-beta-1 activation on the surface of activated regulatory T-cells (Tregs). Required during vasculogenesis. This Mus musculus (Mouse) protein is Integrin beta-8.